A 120-amino-acid chain; its full sequence is ATP synthase subunit a (120 aa).

4 consecutive transmembrane segments (helical) span residues 2 to 22, 29 to 49, 59 to 79, and 94 to 116; these read FFYS…YSYL, FFPF…VGIV, LNIT…LGFY, and IPFV…RSVG.

Belongs to the ATPase A chain family. In terms of assembly, F-type ATPases have 2 components, CF(1) - the catalytic core - and CF(0) - the membrane proton channel. CF(1) has five subunits: alpha(3), beta(3), gamma(1), delta(1), epsilon(1). CF(0) has three main subunits: a, b and c.

Its subcellular location is the mitochondrion inner membrane. Functionally, mitochondrial membrane ATP synthase (F(1)F(0) ATP synthase or Complex V) produces ATP from ADP in the presence of a proton gradient across the membrane which is generated by electron transport complexes of the respiratory chain. F-type ATPases consist of two structural domains, F(1) - containing the extramembraneous catalytic core and F(0) - containing the membrane proton channel, linked together by a central stalk and a peripheral stalk. During catalysis, ATP synthesis in the catalytic domain of F(1) is coupled via a rotary mechanism of the central stalk subunits to proton translocation. Key component of the proton channel; it may play a direct role in the translocation of protons across the membrane. This chain is ATP synthase subunit a (ATP6), found in Naegleria fowleri (Brain eating amoeba).